Reading from the N-terminus, the 124-residue chain is Protein MGF 110-8L (124 aa).

Residues 1–16 form the signal peptide; that stretch reads MKVLILVLLAVVILQA. N-linked (GlcNAc...) asparagine; by host glycans are attached at residues Asn-76 and Asn-94.

Belongs to the asfivirus MGF 110 family.

In terms of biological role, plays a role in virus cell tropism, and may be required for efficient virus replication in macrophages. The sequence is that of Protein MGF 110-8L from Ornithodoros (relapsing fever ticks).